A 311-amino-acid polypeptide reads, in one-letter code: Olfactory receptor 1D4 (311 aa).

Topologically, residues 1–25 (MDGDNQSENSQFLLLGISESPEQQQ) are extracellular. N-linked (GlcNAc...) asparagine glycosylation occurs at Asn5. Residues 26–49 (ILFWMFLSMYLVTVLGNVLIILAI) form a helical membrane-spanning segment. The Cytoplasmic segment spans residues 50-57 (SSDSHLHT). A helical membrane pass occupies residues 58–79 (PMYFFLANLSFTDLFFVTNTIP). Residues 80 to 100 (KMLVNFQSQNKAISYAGCLTQ) are Extracellular-facing. The cysteines at positions 97 and 189 are disulfide-linked. A helical transmembrane segment spans residues 101-120 (LYFLVSLVTLDNLILAVMAY). Residues 121 to 140 (DRYVAICCPLHYVTAMSPGL) are Cytoplasmic-facing. The helical transmembrane segment at 141–158 (CVLLLSLCWGLSVLYGLL) threads the bilayer. The Extracellular portion of the chain corresponds to 159–196 (LTFLLTRVTFCGPREIHYLFCDMYILLWLACSNTHIIH). The chain crosses the membrane as a helical span at residues 197–220 (TALIATGCFIFLTLLGFMTTSYVR). The Cytoplasmic segment spans residues 221 to 237 (IVRTILQMPSASKKYKT). The helical transmembrane segment at 238–260 (FSTCASHLGVVSLFYGTLAMVYL) threads the bilayer. At 261–271 (QPLHTYSMKDS) the chain is on the extracellular side. Residues 272 to 291 (VATVMYAVLTPMMNPFIYSL) form a helical membrane-spanning segment. The Cytoplasmic portion of the chain corresponds to 292–311 (RNKDMHGAPGRVLWRPFQRP).

This sequence belongs to the G-protein coupled receptor 1 family.

The protein localises to the cell membrane. Odorant receptor. The polypeptide is Olfactory receptor 1D4 (OR1D4) (Homo sapiens (Human)).